Reading from the N-terminus, the 49-residue chain is Large ribosomal subunit protein eL40 (49 aa).

Belongs to the eukaryotic ribosomal protein eL40 family.

In Methanopyrus kandleri (strain AV19 / DSM 6324 / JCM 9639 / NBRC 100938), this protein is Large ribosomal subunit protein eL40.